Consider the following 77-residue polypeptide: Phytosulfokines 5 (77 aa).

The first 24 residues, 1 to 24 (MVKFTTFLCIIALLLCSTLTHASA), serve as a signal peptide directing secretion. A propeptide spanning residues 25–68 (RLNPTSVYPEENSFKKLEQGEVICEGVGEEECFLIRRTLVAHTD) is cleaved from the precursor. Residues Tyr69 and Tyr71 each carry the sulfotyrosine modification. The propeptide occupies 74 to 77 (NHNP).

It belongs to the phytosulfokine family. Post-translationally, sulfation is important for activity and for the binding to a putative membrane receptor. In terms of processing, PSK-beta is an enzymatic derivative of PSK-alpha. In terms of tissue distribution, expressed in stems, roots, mature leaves and flowers. Most abundant in vascular bundles.

It is found in the secreted. Promotes plant cell differentiation, organogenesis and somatic embryogenesis as well as cell proliferation. May be involved in the low quiescent center cell proliferation. The polypeptide is Phytosulfokines 5 (PSK5) (Arabidopsis thaliana (Mouse-ear cress)).